The sequence spans 198 residues: MTKKTLAFASGSDHKTKEMQMLLSPFGYEIVTPKILGIPFSPEETESTFVGNSFIKSKELFRLTGFPSFADDSGISVDALGGEPGVLSARFGGPGLSDKDRALYLLNKLGTNHNRKAHYSCVVSFVDANHQVSFEGKVEGLIASDYDELGKFGFGYDPIFYYPEFGKRFSEVPEGEKNKVSHRKKAMELFLEWFQTIQ.

10-15 serves as a coordination point for substrate; the sequence is SGSDHK. Mg(2+) is bound by residues Glu43 and Asp72. Residue Asp72 is the Proton acceptor of the active site. Residues Ser73, 154–157, Lys177, and 182–183 each bind substrate; these read FGYD and HR.

This sequence belongs to the HAM1 NTPase family. In terms of assembly, homodimer. The cofactor is Mg(2+).

It carries out the reaction XTP + H2O = XMP + diphosphate + H(+). The catalysed reaction is dITP + H2O = dIMP + diphosphate + H(+). It catalyses the reaction ITP + H2O = IMP + diphosphate + H(+). Pyrophosphatase that catalyzes the hydrolysis of nucleoside triphosphates to their monophosphate derivatives, with a high preference for the non-canonical purine nucleotides XTP (xanthosine triphosphate), dITP (deoxyinosine triphosphate) and ITP. Seems to function as a house-cleaning enzyme that removes non-canonical purine nucleotides from the nucleotide pool, thus preventing their incorporation into DNA/RNA and avoiding chromosomal lesions. This chain is dITP/XTP pyrophosphatase, found in Leptospira biflexa serovar Patoc (strain Patoc 1 / Ames).